A 253-amino-acid chain; its full sequence is 5'/3'-nucleotidase SurE (253 aa).

Asp-8, Asp-9, Ser-39, and Asn-92 together coordinate a divalent metal cation.

It belongs to the SurE nucleotidase family. A divalent metal cation serves as cofactor.

It localises to the cytoplasm. It catalyses the reaction a ribonucleoside 5'-phosphate + H2O = a ribonucleoside + phosphate. The enzyme catalyses a ribonucleoside 3'-phosphate + H2O = a ribonucleoside + phosphate. The catalysed reaction is [phosphate](n) + H2O = [phosphate](n-1) + phosphate + H(+). Functionally, nucleotidase with a broad substrate specificity as it can dephosphorylate various ribo- and deoxyribonucleoside 5'-monophosphates and ribonucleoside 3'-monophosphates with highest affinity to 3'-AMP. Also hydrolyzes polyphosphate (exopolyphosphatase activity) with the preference for short-chain-length substrates (P20-25). Might be involved in the regulation of dNTP and NTP pools, and in the turnover of 3'-mononucleotides produced by numerous intracellular RNases (T1, T2, and F) during the degradation of various RNAs. This is 5'/3'-nucleotidase SurE from Shigella boydii serotype 18 (strain CDC 3083-94 / BS512).